The primary structure comprises 586 residues: Alanine racemase ungC (586 aa).

The tract at residues Arg-187–Pro-206 is disordered. Polar residues predominate over residues Ser-196–Pro-206.

The protein belongs to the trans-sulfuration enzymes family. The cofactor is pyridoxal 5'-phosphate.

The catalysed reaction is L-alanine = D-alanine. It functions in the pathway secondary metabolite biosynthesis. Alanine racemase; part of the gene cluster that mediates the biosynthesis of the unguisins, gamma-aminobutyric acid (GABA)-containing fungal cyclic heptapeptides with the amino acid sequence cyclo-(D-Ala1-D-Val2-L-Phe3-D-Val4-D-Ala5-D-Trp6-GABA7) for unguisin A and cyclo-(D-Ala1-D-Val2-L-Leu3-D-Val4-D-Ala5-D-Trp6-GABA7) for unguisin B. Within the pathway, the alanine racemase ungC catalyzes the interconversion of L-alanine and D-alanine, providing the D-alanine which is accepted by the first adenylation domain of the nonribosomal peptide synthetase (NRPS) ungA. UngA is the main enzyme within the cluster which condenses the 7 residues using its respective 7 modules. The terminal condensation domain (Ct) is involved in cyclization with D-alanine and thereby releasing of unguisins A and B. Finally, the hydrolase ungD catalyzes the hydrolysis between the D-tryptophan and GABA residues of unguisins A and B to produce the corresponding linear peptides. This is Alanine racemase ungC from Aspergillus violaceofuscus (strain CBS 115571).